The following is a 392-amino-acid chain: MATMQLQRTASLSALVFPNKISTEHQSLMFVKRLLAVSVSCITYLRGIFPERAYGTRYLDDLCVKILKEDKNCPGSSQLVKWMLGCYDALQKKYLRMIILAVYTNPGDPQTISECYQFKFKYTKNGPIMDFISKNQNNKSSTTSADTKKASILLIRKIYVLMQNLGPLPNDVCLTMKLFYYDEVTPPDYQPPGFKDGDCEGVIFDGDPTYLNVGEVPTPFHTFRLKVTTEKERMENIDSTILKPKESKTQFEKILMDKDDVEDENHNNFDIKTKMNEQNENSGASEIKEPNLDCKEEETMQFKKSQSPSISHCQVEQLVSKTSELDVSESKTRSGKIFQSKMVNGNNQQGQTSKENRKRSLRQFRKTVLHVLESSQESVLKKRRVSEPKEHT.

The HORMA domain occupies 25-227 (HQSLMFVKRL…TPFHTFRLKV (203 aa)). The interval 323-359 (SELDVSESKTRSGKIFQSKMVNGNNQQGQTSKENRKR) is disordered. Residues 341–353 (KMVNGNNQQGQTS) are compositionally biased toward polar residues. Phosphoserine is present on Ser-375. Residues 381–384 (KKRR) carry the Nuclear localization signal motif.

In terms of assembly, interacts with HORMAD2. Interacts with IHO1. In terms of processing, phosphorylated at Ser-375 in a SPO11-dependent manner. Specifically expressed in meiotic germ cells.

It is found in the nucleus. The protein localises to the chromosome. Its subcellular location is the cytoplasm. Its function is as follows. Plays a key role in meiotic progression. Regulates 3 different functions during meiosis: ensures that sufficient numbers of processed DNA double-strand breaks (DSBs) are available for successful homology search by increasing the steady-state numbers of single-stranded DSB ends. Promotes synaptonemal-complex formation independently of its role in homology search. Plays a key role in the male mid-pachytene checkpoint and the female meiotic prophase checkpoint: required for efficient build-up of ATR activity on unsynapsed chromosome regions, a process believed to form the basis of meiotic silencing of unsynapsed chromatin (MSUC) and meiotic prophase quality control in both sexes. In Mus musculus (Mouse), this protein is HORMA domain-containing protein 1.